Consider the following 116-residue polypeptide: Protein Wnt-5a (116 aa).

A lipid anchor (O-palmitoleoyl serine; by PORCN) is attached at S1. Residues N69 and N83 are each glycosylated (N-linked (GlcNAc...) asparagine). Cysteines 82 and 97 form a disulfide.

Belongs to the Wnt family. In terms of processing, palmitoleoylation is required for efficient binding to frizzled receptors. Depalmitoleoylation leads to Wnt signaling pathway inhibition.

It is found in the secreted. Its subcellular location is the extracellular space. The protein resides in the extracellular matrix. Functionally, ligand for members of the frizzled family of seven transmembrane receptors. Can activate or inhibit canonical Wnt signaling, depending on receptor context. Required during embryogenesis for extension of the primary anterior-posterior axis. This Meleagris gallopavo (Wild turkey) protein is Protein Wnt-5a (WNT5A).